Consider the following 1605-residue polypeptide: Zinc finger protein jing homolog (1605 aa).

Polar residues predominate over residues 1–15 (MQHQSLSVRNSSGIS). Disordered regions lie at residues 1–28 (MQHQ…VRSS), 60–117 (QWPW…QQSN), 359–388 (TRKV…TSDP), 441–468 (QQHQ…TQAQ), 856–877 (STTS…PPKL), 917–947 (TKAT…ASCT), and 991–1213 (NDSG…TDFL). Low complexity predominate over residues 64-117 (NTSNNTNATNSNNVQSNNNSSTATSNSSTNSNNSPAVNTPTTQNQSQPTTQQSN). Residues 991 to 1000 (NDSGIVANSS) are compositionally biased toward polar residues. The span at 1021-1030 (PQKKDEESRQ) shows a compositional bias: basic and acidic residues. Over residues 1035–1049 (SPVPSPSPLSEPPVI) the composition is skewed to pro residues. Composition is skewed to acidic residues over residues 1053-1090 (SEPE…DEPH) and 1099-1110 (SSEAVELPELED). The span at 1112–1126 (QPSPPLPCELPPPPT) shows a compositional bias: pro residues. Low complexity predominate over residues 1135–1149 (LSLPPSQKSPKSLLL). Residues 1165–1201 (QESMSSDQDYSNQSPLDESSPTGSAEPSESQRSTTPV) are compositionally biased toward polar residues. The segment at 1260-1285 (GVCYWSNCDAQFDTSSKLLDHLQIQH) adopts a C2H2-type 1 zinc-finger fold. The C2H2-type 2; degenerate zinc finger occupies 1293–1320 (FACLWDGCKVHNKESCSRRWLERHVLSH). Residues 1326–1350 (HKCIVAGCGMRFGSQLALEKHVNHH) form a C2H2-type 3 zinc finger. 2 disordered regions span residues 1352 to 1371 (NNTD…LPKV) and 1511 to 1605 (CSRS…SSTS). 2 stretches are compositionally biased toward low complexity: residues 1511-1537 (CSRS…SLIS) and 1556-1605 (KQSY…SSTS).

The protein belongs to the AEBP2/jing C2H2-type zinc-finger family.

The protein localises to the nucleus. In terms of biological role, may functionally interact with Polycomb group (PcG) and trithorax group (trxG) proteins to repress transcription. This chain is Zinc finger protein jing homolog, found in Aedes aegypti (Yellowfever mosquito).